Reading from the N-terminus, the 515-residue chain is BURP domain-containing protein 9 (515 aa).

Residues 1–29 (MKATGGPLPLILFLLIIIVLITAQHTAIA) form the signal peptide. Residues 292 to 507 (YFFEDNLAPG…GRGSIIWVPV (216 aa)) form the BURP domain. N-linked (GlcNAc...) asparagine glycans are attached at residues Asn-321, Asn-332, and Asn-470.

In terms of tissue distribution, expressed in shoot and panicles.

The polypeptide is BURP domain-containing protein 9 (BURP9) (Oryza sativa subsp. japonica (Rice)).